A 241-amino-acid chain; its full sequence is Phosphoribosylformylglycinamidine synthase subunit PurQ (241 aa).

Residues 6 to 241 form the Glutamine amidotransferase type-1 domain; that stretch reads NVGIVVFPGS…QSLLLASAFA (236 aa). Cysteine 90 serves as the catalytic Nucleophile. Active-site residues include histidine 207 and glutamate 209.

As to quaternary structure, part of the FGAM synthase complex composed of 1 PurL, 1 PurQ and 2 PurS subunits.

Its subcellular location is the cytoplasm. It carries out the reaction N(2)-formyl-N(1)-(5-phospho-beta-D-ribosyl)glycinamide + L-glutamine + ATP + H2O = 2-formamido-N(1)-(5-O-phospho-beta-D-ribosyl)acetamidine + L-glutamate + ADP + phosphate + H(+). The catalysed reaction is L-glutamine + H2O = L-glutamate + NH4(+). Its pathway is purine metabolism; IMP biosynthesis via de novo pathway; 5-amino-1-(5-phospho-D-ribosyl)imidazole from N(2)-formyl-N(1)-(5-phospho-D-ribosyl)glycinamide: step 1/2. Its function is as follows. Part of the phosphoribosylformylglycinamidine synthase complex involved in the purines biosynthetic pathway. Catalyzes the ATP-dependent conversion of formylglycinamide ribonucleotide (FGAR) and glutamine to yield formylglycinamidine ribonucleotide (FGAM) and glutamate. The FGAM synthase complex is composed of three subunits. PurQ produces an ammonia molecule by converting glutamine to glutamate. PurL transfers the ammonia molecule to FGAR to form FGAM in an ATP-dependent manner. PurS interacts with PurQ and PurL and is thought to assist in the transfer of the ammonia molecule from PurQ to PurL. This Thermosynechococcus vestitus (strain NIES-2133 / IAM M-273 / BP-1) protein is Phosphoribosylformylglycinamidine synthase subunit PurQ.